A 247-amino-acid chain; its full sequence is ATP synthase subunit a, chloroplastic (247 aa).

5 helical membrane-spanning segments follow: residues 38–58, 95–115, 134–154, 199–219, and 220–240; these read QVLI…AIAV, VPFI…GALL, INTT…AGLT, LVVV…VMFL, and GLFT…AYIG.

It belongs to the ATPase A chain family. As to quaternary structure, F-type ATPases have 2 components, CF(1) - the catalytic core - and CF(0) - the membrane proton channel. CF(1) has five subunits: alpha(3), beta(3), gamma(1), delta(1), epsilon(1). CF(0) has four main subunits: a, b, b' and c.

Its subcellular location is the plastid. The protein resides in the chloroplast thylakoid membrane. In terms of biological role, key component of the proton channel; it plays a direct role in the translocation of protons across the membrane. This Ceratophyllum demersum (Rigid hornwort) protein is ATP synthase subunit a, chloroplastic.